The sequence spans 455 residues: Serine incorporator 2 (455 aa).

Transmembrane regions (helical) follow at residues 5 to 27 (LGACSLLSCASCLCGSAPCILCS), 40 to 57 (LIFTFFLFLGVLVSIIML), 96 to 118 (AVYRMCFATAAFFFFFTLLMLCV), 131 to 150 (GFWFFKFLILVGLTVGAFYI), 160 to 182 (FYFGVVGSFLFILIQLVLLIDFA), 202 to 224 (YAGLFFFTLLFYLLSIAAVALMF), 239 to 256 (FISLNLTFCVCVSIAAVL), 268 to 290 (LLQASVITLYTMFVTWSALSSIP), 317 to 339 (QWWDAPSIVGLIIFLLCTLFISL), 385 to 407 (TYSYSFFHFCLVLASLHVMMTLT), and 422 to 444 (WTAVWVKICASWAGLLLYLWTLV).

The protein belongs to the TDE1 family.

Its subcellular location is the cell membrane. The catalysed reaction is a 1,2-diacyl-sn-glycero-3-phospho-L-serine(in) = a 1,2-diacyl-sn-glycero-3-phospho-L-serine(out). It catalyses the reaction a 1,2-diacyl-sn-glycero-3-phosphocholine(in) = a 1,2-diacyl-sn-glycero-3-phosphocholine(out). The enzyme catalyses a 1,2-diacyl-sn-glycero-3-phosphoethanolamine(in) = a 1,2-diacyl-sn-glycero-3-phosphoethanolamine(out). In terms of biological role, non-ATP-dependent, non-specific lipid transporter for phosphatidylserine, phosphatidylcholine, and phosphatidylethanolamine. Functions as a scramblase that flips lipids in both directions across the membrane. In contrast to SERINC3 and SERINC5, has no effect on HIV-1 particles infectivity. This chain is Serine incorporator 2, found in Homo sapiens (Human).